Here is a 484-residue protein sequence, read N- to C-terminus: Sperm motility kinase Tcr mutant form (484 aa).

One can recognise a Protein kinase domain in the interval 8–256 (YEMLETIGQG…VAEVMVHPWV (249 aa)). ATP-binding positions include 14–22 (IGQGGCAQV) and Lys-37. Asp-127 serves as the catalytic Proton acceptor. 2 disordered regions span residues 355–400 (EPTG…TMDQ) and 426–446 (STEG…RGWP). Positions 391-400 (PINTTPTMDQ) are enriched in polar residues.

Belongs to the protein kinase superfamily. Tyr protein kinase family. Smok subfamily. Testis-specific. Expressed in the testis from 22 days postpartum (22 dpp). Expressed late in spermiogenesis, only in Tcr-containing t-haplotypes.

The enzyme catalyses L-seryl-[protein] + ATP = O-phospho-L-seryl-[protein] + ADP + H(+). It catalyses the reaction L-threonyl-[protein] + ATP = O-phospho-L-threonyl-[protein] + ADP + H(+). In terms of biological role, while the main function of Smoks is to control sperm motility, the role of Smok-Tcr, with reduced kinase activity, is to counterbalance a signaling impairment caused by the distorter/sterility loci, giving t-sperm an advantage in reaching the oocytes. Transmission ratio distortion also called segregation distortion is the name given to the phenomenon above-mentioned. Being associated with the T-complex, it allows males heterozygous for a complete t-haplotype to preferentially transmit the t-haplotype chromosome. This Mus musculus (Mouse) protein is Sperm motility kinase Tcr mutant form (Smoktcr).